Reading from the N-terminus, the 593-residue chain is Regulatory protein NPR1 (593 aa).

Phosphoserine is present on residues Ser11, Ser15, Ser55, and Ser59. Positions 65 to 144 (SDAKLVLSDG…VYSSRVRPPP (80 aa)) constitute a BTB domain. A C2HC NPR-type zinc finger spans residues 147 to 161 (VSECADENCCHVACR). The Zn(2+) site is built by Cys150 and Cys155. Cys156 carries the S-nitrosocysteine modification. 2 residues coordinate Zn(2+): His157 and Cys160. ANK repeat units follow at residues 229–258 (KSNVDMVSLEKSLPEELVKEIIDRRKELGL), 265–295 (KHVSNVHKALDSDDIELVKLLLKEDHTNLDD), 297–324 (CALHFAVAYCNVKTATDLLKLDLADVNH), 328–357 (RGYTVLHVAAMRKEPQLILSLLEKGASASE), and 361–397 (EGRTALMIAKQATMAVECNNIPEQCKHSLKGRLCVEI). An SIM3, required fo binding to SUMO3 and subsequent sumoylation motif is present at residues 345–348 (ILSL). Positions 387 to 525 (HSLKGRLCVE…DQIMNCEDLT (139 aa)) are salicylic acid-binding core (SBC). Position 432 (Arg432) interacts with salicylate. The Nuclear localization signal motif lies at 537-554 (KRLQKKQRYMEIQETLKK). A disordered region spans residues 563-593 (LGNSSLTDSTSSTSKSTGGKRSNRKLSHRRR). Positions 566-579 (SSLTDSTSSTSKST) are enriched in low complexity. The segment covering 583 to 593 (RSNRKLSHRRR) has biased composition (basic residues).

The protein belongs to the plant 'ANKYRIN-BTB/POZ' family. 'NPR1-like' subfamily. In terms of assembly, homodimer. Oligomer of dimers in an uninduced quiescent state; disulfide-linked. Forms activated (i.e. sumoylated) homodimers and monomers upon systemic acquired resistance (SAR) induction. Interacts with TGA1, TGA3, TGA4, TGA5, TGA6, TGA7 and with reduced forms of TGA1 and TGA4. Activated homodimer binds two TGA3 dimers in the presence of DNA via its ANK 2 repeat (265-295), thus forming a TGA3(2)-NPR1(2)-TGA3(2) complex in which NPR1 serves as a transcription cofactor by bridging two transcription factor complexes in an enhanceosome. Interacts with NIMIN-1 and NIMIN-3 via its C-terminal region, and with NIMIN-2 via its N-terminal region. Interacts with SUMO3 but not with SUMO1 and SUMO2; this interaction is required for phosphorylation at Ser-11 and Ser-15, and triggers activation by sumoylation and subsequent degradation. Binds to NPR3 and NPR4; these interactions are promoted by association of salicylic acid (SA) with NPR3, but disrupted by SA association with NPR4, probably due to conformational changes. Binds to CUL3A, a core component of the cullin-RING ubiquitin ligases (CRL); this interaction requires NPR3 and NPR4. Interacts with NPR2 independently of SA. Binds to WRKY70 when unmodified (i.e. not sumoylated). Phosphorylation at Ser-55 and Ser-59 prevents sumoylation to ensure stability and quiescence. In terms of processing, phosphorylated at Ser-11 and Ser-15 in the nucleus; facilitates its recruitment to a cullin3-based ubiquitin ligase leading to polyubiquitination and subsequent CUL3/CSN-mediated degradation. This phosphorylation at Ser-11 and Ser-15 requires interaction with SUMO3, and promotes in turn activation by sumoylation and subsequent degradation. Post-translationally, ubiquitinated. Sumoylated by SUMO3 independently of an E3 ligase to activate defense gene expression by switching from association with WRKY transcriptional repressors (e.g. WRKY70) to TGA transcriptional activators (e.g. TGA3). Sumoylation is inhibited by phosphorylation at Ser-55 and Ser-59, but seems to promote phosphorylation at Ser-11 and Ser-15. Sumoylation also triggers degradation, making immune induction transient. In terms of processing, the Cys-82-SH group reacts with Cys-216-SH of the other subunit to form an intermolecular disulfide. This disulfide might subsequently be reduced upon systemic acquired resistance (SAR) induction. Post-translationally, S-nitrosylation at Cys-156 facilitates its oligomerization.

It localises to the cytoplasm. It is found in the nucleus. The protein localises to the nuclear body. Its pathway is protein modification; protein ubiquitination. Functionally, salicylic acid (SA)-binding substrate-specific adapter of an E3 ubiquitin-protein ligase complex (CUL3-RBX1-BTB) which mediates the ubiquitination and subsequent proteasomal degradation of target proteins. Transcription cofactor that represses gene expression in the absence of salicylic acid (SA), when attached to negative cis-elements (W-box) with WRKY transcription factors (e.g. WRKY70), but stimulates gene expression upon activation by SA, when sumoylated and attached to positive cis-elements (as-1) with TGA transcription factors (e.g. TGA3), thus confering immunity through a series of gene regulations ending in a significant increase in antimicrobial and defense genes expression (e.g. PR-1 and PR-2). Binds to SA with low capacity; this leads to conformational changes. Key positive regulator of the SA-dependent signaling pathway that negatively regulates jasmonic acid (JA)-dependent signaling pathway. Controls the onset of systemic acquired resistance (SAR). Upon SAR induction, a biphasic change in cellular reduction potential occurs, resulting in reduction of the cytoplasmic oligomeric form to dimeric and monomeric forms, which accumulate in the nucleus and activate gene expression. Appears to control lesion expansion by acting as an inhibitor of programmed cell death (PCD) during effector-triggered immunity (ETI) that occurs in response to incompatible interaction with avirulent pathogenic bacteria (i.e. Pseudomonas syringae ES4326/avrRpt2) ending in a hypersensitive response (HR). Phosphorylated form is target of proteasome degradation. The sequence is that of Regulatory protein NPR1 from Arabidopsis thaliana (Mouse-ear cress).